The following is a 1007-amino-acid chain: Glucose transport transcription regulator RGT1 (1007 aa).

The span at 1 to 11 (MLSALIQNGMS) shows a compositional bias: polar residues. The segment at 1-115 (MLSALIQNGM…ESRRRSKVSR (115 aa)) is disordered. The span at 21-33 (NNTTNGSSSTTDN) shows a compositional bias: low complexity. Polar residues-rich tracts occupy residues 42-65 (NTENNSKLENDSSNAATITTSKQD), 74-83 (TPRSINTGAS), and 96-105 (VSSNVSTATT). The zn(2)-C6 fungal-type DNA-binding region spans 117-151 (CDQCRKKKIKCDFIEGHDINPDQSCTGCRKIGEKC). 4 disordered regions span residues 155-224 (RIPL…ATST), 267-350 (QRRP…SAIP), 399-423 (LQQQQSLHSPQANTMNASTGISNGG), and 462-496 (AEVESAPASPVQKKRKRSNRSSTSKKGKSTQQNLP). Composition is skewed to polar residues over residues 196-206 (SVSNPVNAVNE) and 274-288 (SLASDSSQKPGGKTN). Low complexity predominate over residues 289 to 303 (QQQPLPSQSQPQSLQ). Polar residues-rich tracts occupy residues 304 to 323 (NIGNSRSNTGPLPTQDTFRN), 329 to 339 (QPSQDSVSEAG), and 404 to 419 (SLHSPQANTMNASTGI). Positions 473–489 (QKKRKRSNRSSTSKKGK) are enriched in basic residues.

The protein belongs to the EDS1/RGT1 family.

It is found in the nucleus. Its subcellular location is the cytoplasm. Functionally, glucose-responsive transcription factor that regulates expression of several glucose transporter (HXT) genes in response to glucose. In the absence of glucose, it functions as a transcriptional repressor, whereas high concentrations of glucose cause it to function as a transcriptional activator. In cells growing on low levels of glucose, has a neutral role, neither repressing nor activating transcription. The protein is Glucose transport transcription regulator RGT1 (RGT1) of Kluyveromyces lactis (strain ATCC 8585 / CBS 2359 / DSM 70799 / NBRC 1267 / NRRL Y-1140 / WM37) (Yeast).